We begin with the raw amino-acid sequence, 377 residues long: Glutamate 5-kinase (377 aa).

Lys-21 contacts ATP. Positions 61, 149, and 161 each coordinate substrate. Residues 181 to 182 (SD) and 223 to 229 (SGGMTSK) contribute to the ATP site. Residues 286–363 (RGSVQVDAGA…REHEELLGYA (78 aa)) form the PUA domain.

It belongs to the glutamate 5-kinase family.

It is found in the cytoplasm. The catalysed reaction is L-glutamate + ATP = L-glutamyl 5-phosphate + ADP. It participates in amino-acid biosynthesis; L-proline biosynthesis; L-glutamate 5-semialdehyde from L-glutamate: step 1/2. Its function is as follows. Catalyzes the transfer of a phosphate group to glutamate to form L-glutamate 5-phosphate. The chain is Glutamate 5-kinase from Novosphingobium aromaticivorans (strain ATCC 700278 / DSM 12444 / CCUG 56034 / CIP 105152 / NBRC 16084 / F199).